The primary structure comprises 874 residues: Alanine--tRNA ligase (874 aa).

Residues H562, H566, C665, and H669 each contribute to the Zn(2+) site.

This sequence belongs to the class-II aminoacyl-tRNA synthetase family. Requires Zn(2+) as cofactor.

It localises to the cytoplasm. The enzyme catalyses tRNA(Ala) + L-alanine + ATP = L-alanyl-tRNA(Ala) + AMP + diphosphate. Catalyzes the attachment of alanine to tRNA(Ala) in a two-step reaction: alanine is first activated by ATP to form Ala-AMP and then transferred to the acceptor end of tRNA(Ala). Also edits incorrectly charged Ser-tRNA(Ala) and Gly-tRNA(Ala) via its editing domain. The polypeptide is Alanine--tRNA ligase (Pseudomonas putida (strain ATCC 700007 / DSM 6899 / JCM 31910 / BCRC 17059 / LMG 24140 / F1)).